The chain runs to 88 residues: Large ribosomal subunit protein bL27 (88 aa).

The segment at methionine 1–leucine 21 is disordered. Positions alanine 7–glutamine 19 are enriched in polar residues.

The protein belongs to the bacterial ribosomal protein bL27 family.

This chain is Large ribosomal subunit protein bL27, found in Frankia casuarinae (strain DSM 45818 / CECT 9043 / HFP020203 / CcI3).